The primary structure comprises 432 residues: Homogentisate 1,2-dioxygenase (432 aa).

The Proton acceptor role is filled by His286. The Fe cation site is built by His329 and Glu335. Positions 344 and 365 each coordinate homogentisate. A Fe cation-binding site is contributed by His365.

It belongs to the homogentisate dioxygenase family. Hexamer; dimer of trimers. Fe cation is required as a cofactor.

The enzyme catalyses homogentisate + O2 = 4-maleylacetoacetate + H(+). Its pathway is amino-acid degradation; L-phenylalanine degradation; acetoacetate and fumarate from L-phenylalanine: step 4/6. In terms of biological role, involved in the catabolism of homogentisate (2,5-dihydroxyphenylacetate or 2,5-OH-PhAc), a central intermediate in the degradation of phenylalanine and tyrosine. Catalyzes the oxidative ring cleavage of the aromatic ring of homogentisate to yield maleylacetoacetate. In Bordetella pertussis (strain Tohama I / ATCC BAA-589 / NCTC 13251), this protein is Homogentisate 1,2-dioxygenase.